Here is a 223-residue protein sequence, read N- to C-terminus: Ribonuclease T (223 aa).

The region spanning 20–194 (VVIDVETAGF…YDTERTAELF (175 aa)) is the Exonuclease domain. Asp-23, Glu-25, His-181, and Asp-186 together coordinate Mg(2+). His-181 (proton donor/acceptor) is an active-site residue.

This sequence belongs to the RNase T family. As to quaternary structure, homodimer. Mg(2+) serves as cofactor.

Functionally, trims short 3' overhangs of a variety of RNA species, leaving a one or two nucleotide 3' overhang. Responsible for the end-turnover of tRNA: specifically removes the terminal AMP residue from uncharged tRNA (tRNA-C-C-A). Also appears to be involved in tRNA biosynthesis. This chain is Ribonuclease T, found in Shewanella baltica (strain OS155 / ATCC BAA-1091).